Reading from the N-terminus, the 335-residue chain is Methionine aminopeptidase 1D, mitochondrial (335 aa).

The N-terminal 19 residues, 1–19, are a transit peptide targeting the mitochondrion; that stretch reads MAAPIGVPLLVRGGCQRIL. H161 is a binding site for substrate. The a divalent metal cation site is built by D178, D189, and H252. H259 serves as a coordination point for substrate. The a divalent metal cation site is built by E284 and E315.

The protein belongs to the peptidase M24A family. Methionine aminopeptidase type 1 subfamily. Requires Co(2+) as cofactor. Zn(2+) is required as a cofactor. The cofactor is Mn(2+). Fe(2+) serves as cofactor.

The protein resides in the mitochondrion. The catalysed reaction is Release of N-terminal amino acids, preferentially methionine, from peptides and arylamides.. In terms of biological role, removes the N-terminal methionine from nascent proteins. The N-terminal methionine is often cleaved when the second residue in the primary sequence is small and uncharged (Met-Ala-, Cys, Gly, Pro, Ser, Thr, or Val). Requires deformylation of the N(alpha)-formylated initiator methionine before it can be hydrolyzed. The polypeptide is Methionine aminopeptidase 1D, mitochondrial (Metap1d) (Mus musculus (Mouse)).